We begin with the raw amino-acid sequence, 180 residues long: Pro-glucagon (180 aa).

Residues methionine 1–glutamine 20 form the signal peptide. Positions asparagine 25 to threonine 59 are disordered. The residue at position 54 (serine 54) is a Phosphoserine. Residues asparagine 84–alanine 89 constitute a propeptide that is removed on maturation. Serine 105 and serine 108 each carry phosphoserine. Position 127 is an arginine amide (arginine 127). The propeptide occupies aspartate 131–arginine 145. Residues serine 150 and serine 152 each carry the phosphoserine modification.

The protein belongs to the glucagon family. Post-translationally, proglucagon is post-translationally processed in a tissue-specific manner in pancreatic A cells and intestinal L cells. In pancreatic A cells, the major bioactive hormone is glucagon cleaved by PCSK2/PC2. In the intestinal L cells PCSK1/PC1 liberates GLP-1, GLP-2, glicentin and oxyntomodulin. GLP-1 is further N-terminally truncated by post-translational processing in the intestinal L cells resulting in GLP-1(7-37) GLP-1-(7-36)amide. The C-terminal amidation is neither important for the metabolism of GLP-1 nor for its effects on the endocrine pancreas. Glucagon is secreted in the A cells of the islets of Langerhans. GLP-1, GLP-2, oxyntomodulin and glicentin are secreted from enteroendocrine cells throughout the gastrointestinal tract. GLP-1 and GLP-2 are also secreted in selected neurons in the brain.

It is found in the secreted. Plays a key role in glucose metabolism and homeostasis. Regulates blood glucose by increasing gluconeogenesis and decreasing glycolysis. A counterregulatory hormone of insulin, raises plasma glucose levels in response to insulin-induced hypoglycemia. Plays an important role in initiating and maintaining hyperglycemic conditions in diabetes. Its function is as follows. Potent stimulator of glucose-dependent insulin release. Also stimulates insulin release in response to IL6. Plays important roles on gastric motility and the suppression of plasma glucagon levels. May be involved in the suppression of satiety and stimulation of glucose disposal in peripheral tissues, independent of the actions of insulin. Has growth-promoting activities on intestinal epithelium. May also regulate the hypothalamic pituitary axis (HPA) via effects on LH, TSH, CRH, oxytocin, and vasopressin secretion. Increases islet mass through stimulation of islet neogenesis and pancreatic beta cell proliferation. Inhibits beta cell apoptosis. Functionally, stimulates intestinal growth and up-regulates villus height in the small intestine, concomitant with increased crypt cell proliferation and decreased enterocyte apoptosis. The gastrointestinal tract, from the stomach to the colon is the principal target for GLP-2 action. Plays a key role in nutrient homeostasis, enhancing nutrient assimilation through enhanced gastrointestinal function, as well as increasing nutrient disposal. Stimulates intestinal glucose transport and decreases mucosal permeability. In terms of biological role, significantly reduces food intake. Inhibits gastric emptying in humans. Suppression of gastric emptying may lead to increased gastric distension, which may contribute to satiety by causing a sensation of fullness. May modulate gastric acid secretion and the gastro-pyloro-duodenal activity. May play an important role in intestinal mucosal growth in the early period of life. This is Pro-glucagon (GCG) from Sus scrofa (Pig).